A 561-amino-acid chain; its full sequence is Formate--tetrahydrofolate ligase (561 aa).

An ATP-binding site is contributed by 66-73; sequence TPAGEGKT.

Belongs to the formate--tetrahydrofolate ligase family.

It carries out the reaction (6S)-5,6,7,8-tetrahydrofolate + formate + ATP = (6R)-10-formyltetrahydrofolate + ADP + phosphate. It participates in one-carbon metabolism; tetrahydrofolate interconversion. This is Formate--tetrahydrofolate ligase from Methylibium petroleiphilum (strain ATCC BAA-1232 / LMG 22953 / PM1).